Here is a 609-residue protein sequence, read N- to C-terminus: Zinc metalloproteinase/disintegrin-like HR1a (609 aa).

Residues 1–20 (MIQVLLVTICLAVFPYQGSS) form the signal peptide. A propeptide spanning residues 21 to 190 (IILGSGNVND…KKASKLVVTA (170 aa)) is cleaved from the precursor. Residues 200–396 (RFIELVIVAD…DEPQCILNEP (197 aa)) enclose the Peptidase M12B domain. 2 residues coordinate Ca(2+): Glu203 and Asp287. Asn298 is a glycosylation site (N-linked (GlcNAc...) asparagine). 3 disulfide bridges follow: Cys311/Cys391, Cys351/Cys375, and Cys353/Cys358. His336 contributes to the Zn(2+) binding site. Glu337 is an active-site residue. Zn(2+)-binding residues include His340 and His346. Residue Asn350 is glycosylated (N-linked (GlcNAc...) asparagine). The N-linked (GlcNAc...) asparagine glycan is linked to Asn374. Residues Cys391 and Asn394 each coordinate Ca(2+). A propeptide spanning residues 397–400 (LRTD) is cleaved from the precursor. The region spanning 404–490 (PPVCGNELLE…DCPTDRFHRN (87 aa)) is the Disintegrin domain. Residues Val406, Asn409, Leu411, Glu413, Glu416, and Asp419 each contribute to the Ca(2+) site. Cystine bridges form between Cys407/Cys426, Cys407/Cys436, Cys418/Cys431, Cys418/Cys436, Cys420/Cys426, Cys430/Cys453, Cys444/Cys450, Cys449/Cys475, Cys462/Cys482, Cys469/Cys494, Cys469/Cys501, Cys494/Cys506, Cys501/Cys506, Cys513/Cys528, Cys513/Cys563, Cys528/Cys571, Cys541/Cys551, Cys551/Cys558, Cys558/Cys597, Cys563/Cys571, Cys591/Cys602, and Cys597/Cys602. The D/ECD-tripeptide signature appears at 468-470 (ECD). Asp470, Glu473, and Asp485 together coordinate Ca(2+). Asn520 carries N-linked (GlcNAc...) asparagine glycosylation.

This sequence belongs to the venom metalloproteinase (M12B) family. P-III subfamily. P-IIIb sub-subfamily. As to quaternary structure, monomer. Requires Zn(2+) as cofactor. Expressed by the venom gland.

It is found in the secreted. Functionally, zinc protease that induces hemorrhage and has proteolytic activity. Has preference for Ala, His, Pro, Met, and Tyr at the P1 position, in descending order (in vitro). Predominantly prefers Val and Asp at the P3 and P2 positions, respectively. In terms of biological role, inhibits platelet aggregation induced by ADP, thrombin, platelet-activating factor and collagen. Acts by inhibiting fibrinogen interaction with platelet receptors alpha-IIb/beta-3 (ITGA2B/ITGB3). This chain is Zinc metalloproteinase/disintegrin-like HR1a, found in Protobothrops flavoviridis (Habu).